A 316-amino-acid polypeptide reads, in one-letter code: MNQLDGIKQFTTVVADSGDIESIRHYQPQDATTNPSLLLKAAGLEQYGHLIEDAIAWGKKHGGTQEQQVAAASDKLAVNFGAEILKSIPGRVSTEVDARLSFDKEKSIEKARHLVDLYQQQGVDKSRILIKLAATWEGIRAAGQLEKEGINCNLTLLFSFAQARACAEAGVYLISPFVGRIYDWYQARSPLEPYVVEEDPGVKSVRNIYDYFKQHRYETIVMGASFRRTEQILALTGCDRLTISPNLLKELKEKEEPVIRKLVPSSQMFHRPTPMTEAEFRWEHNQDAMAVEKLSEGIRLFAVDQRKLEDLLAAKL.

The active-site Schiff-base intermediate with substrate is the Lys-131.

It belongs to the transaldolase family. Type 1 subfamily. Homodimer.

The protein resides in the cytoplasm. It catalyses the reaction D-sedoheptulose 7-phosphate + D-glyceraldehyde 3-phosphate = D-erythrose 4-phosphate + beta-D-fructose 6-phosphate. It participates in carbohydrate degradation; pentose phosphate pathway; D-glyceraldehyde 3-phosphate and beta-D-fructose 6-phosphate from D-ribose 5-phosphate and D-xylulose 5-phosphate (non-oxidative stage): step 2/3. Transaldolase is important for the balance of metabolites in the pentose-phosphate pathway. The chain is Transaldolase A from Salmonella typhimurium (strain LT2 / SGSC1412 / ATCC 700720).